Here is a 1203-residue protein sequence, read N- to C-terminus: Zinc finger and BTB domain-containing protein 38 (1203 aa).

The region spanning 33-100 (CDVTIIVEDT…IYSSTVVVRR (68 aa)) is the BTB domain. Lys43 is covalently cross-linked (Glycyl lysine isopeptide (Lys-Gly) (interchain with G-Cter in SUMO2)). Phosphoserine is present on Ser130. Residues Lys145, Lys148, Lys151, and Lys260 each participate in a glycyl lysine isopeptide (Lys-Gly) (interchain with G-Cter in SUMO2) cross-link. Residues 230–334 (EAYRSQPLRE…PSETPGPPAA (105 aa)) are disordered. A compositionally biased stretch (polar residues) spans 269 to 280 (TQTQDSDSTTEN). The segment at 299–522 (PAPILSHSEP…RRYQCIFCLE (224 aa)) is interaction with CBFA2T3. The segment covering 313-322 (GDVHFPREDE) has biased composition (basic and acidic residues). Residues 341-363 (YNCSCCSKSFDSSTLLGAHMQLH) form a C2H2-type 1 zinc finger. Residues 370–394 (FVCKYCNKQFTTLNRLDRHEQICMR) form a C2H2-type 2; degenerate zinc finger. 3 C2H2-type zinc fingers span residues 459 to 481 (YSCV…ANVH), 487 to 509 (YPCH…EIWH), and 515 to 538 (YQCI…KSFH). Glycyl lysine isopeptide (Lys-Gly) (interchain with G-Cter in SUMO2) cross-links involve residues Lys549 and Lys556. Polar residues-rich tracts occupy residues 581-598 (RNSS…NESP), 607-628 (LPSS…TSSP), 635-644 (PSWQGTPTSA), and 731-741 (SNHQSPSQPVA). Disordered regions lie at residues 581–644 (RNSS…PTSA) and 731–776 (SNHQ…VPCN). Residues 747-757 (KDSKPEADKAS) show a composition bias toward basic and acidic residues. Residues Lys750, Lys755, Lys796, Lys806, Lys813, Lys834, Lys842, and Lys849 each participate in a glycyl lysine isopeptide (Lys-Gly) (interchain with G-Cter in SUMO2) cross-link. Disordered stretches follow at residues 857–882 (KPKY…SPLG) and 895–914 (FDEV…YYNY). Residues 866 to 877 (TLPRESDPETRG) are compositionally biased toward basic and acidic residues. Glycyl lysine isopeptide (Lys-Gly) (interchain with G-Cter in SUMO2) cross-links involve residues Lys915, Lys971, Lys976, Lys984, Lys988, Lys998, Lys1024, and Lys1033. 5 C2H2-type zinc fingers span residues 1017–1039 (YICE…MRCH), 1045–1067 (YQCK…ERIH), 1073–1095 (FICQ…ERIH), 1101–1123 (YHCQ…ERRH), and 1132–1154 (FACF…QKKH). Glycyl lysine isopeptide (Lys-Gly) (interchain with G-Cter in SUMO2) cross-links involve residues Lys1116, Lys1139, Lys1142, Lys1157, and Lys1190. The segment at 1172-1203 (NSDLLESQPCTDSEDSDQKDDIKKPLLKMSFE) is disordered.

Interacts with CBFA2T3, ZBTB4 and RBBP6. Ubiquitinated by RBBP6; leading to its degradation by the proteasome. In terms of tissue distribution, widely expressed throughout the adult brain where it is found mainly in neurons. Also expressed in the adrenal medulla. Not detected in non-neural tissues including heart, spleen, liver and muscle. In the embryo, expressed in the developing brain and spinal cord but not in the migratory neural crest. Also expressed in the limbs, transiently in somites, and in the embryonic liver. In the embryonic neural tube, expression is restricted to late postmitotic neurons.

The protein resides in the nucleus. It localises to the chromosome. Functionally, transcriptional regulator with bimodal DNA-binding specificity. Binds with a higher affinity to methylated CpG dinucleotides in the consensus sequence 5'-CGCG-3' but can also bind to E-box elements (5'-CACGTG-3'). Can also bind specifically to a single methyl-CpG pair. Represses transcription in a methyl-CpG-dependent manner. Plays an important role in regulating DNA-replication and common fragile sites (CFS) stability in a RBBP6- and MCM10-dependent manner; represses expression of MCM10 which plays an important role in DNA-replication. Acts as a transcriptional activator. May be involved in the differentiation and/or survival of late postmitotic neurons. The protein is Zinc finger and BTB domain-containing protein 38 of Rattus norvegicus (Rat).